The chain runs to 151 residues: Cysteine protease inhibitor 5 (151 aa).

2 cysteine pairs are disulfide-bonded: C13–C65 and C114–C120.

It belongs to the protease inhibitor I3 (leguminous Kunitz-type inhibitor) family.

Its subcellular location is the vacuole. Its function is as follows. Inhibitor of cysteine proteases. May protect the plant by inhibiting proteases of invading organisms. This chain is Cysteine protease inhibitor 5, found in Solanum tuberosum (Potato).